Here is a 309-residue protein sequence, read N- to C-terminus: Dihydroorotate dehydrogenase B (NAD(+)), catalytic subunit (309 aa).

FMN-binding positions include Ser-21 and 45-46 (KA). Residues Lys-45 and 69 to 73 (NAIGL) contribute to the substrate site. FMN-binding residues include Asn-99 and Asn-127. A substrate-binding site is contributed by Asn-127. Residue Cys-130 is the Nucleophile of the active site. Positions 165 and 191 each coordinate FMN. 192–193 (NT) is a binding site for substrate. FMN-binding positions include Gly-217, 243-244 (GG), and 265-266 (GT).

This sequence belongs to the dihydroorotate dehydrogenase family. Type 1 subfamily. Heterotetramer of 2 PyrK and 2 PyrD type B subunits. Requires FMN as cofactor.

The protein localises to the cytoplasm. It carries out the reaction (S)-dihydroorotate + NAD(+) = orotate + NADH + H(+). It functions in the pathway pyrimidine metabolism; UMP biosynthesis via de novo pathway; orotate from (S)-dihydroorotate (NAD(+) route): step 1/1. Functionally, catalyzes the conversion of dihydroorotate to orotate with NAD(+) as electron acceptor. This Bacillus mycoides (strain KBAB4) (Bacillus weihenstephanensis) protein is Dihydroorotate dehydrogenase B (NAD(+)), catalytic subunit (pyrD).